The primary structure comprises 130 residues: Ribosome biogenesis inhibitor MINAS-60 (130 aa).

Positions 61 to 130 are disordered; it reads SRVRRIPTRP…RRRRPVTSSC (70 aa). The segment covering 109-130 has biased composition (basic residues); it reads KGRRRRRRRMRRRRRRPVTSSC.

In terms of assembly, interacts with 60S ribosome assembly factors GTPBP4 and MRTO4.

The protein localises to the nucleus. It localises to the nucleolus. Functionally, acts as a late-stage inhibitor of pre-60S ribosome assembly by preventing pre-60S ribosome export from nucleus. This chain is Ribosome biogenesis inhibitor MINAS-60, found in Homo sapiens (Human).